The chain runs to 25 residues: Metallothionein (25 aa).

Cysteine 3, cysteine 5, cysteine 11, cysteine 13, cysteine 18, cysteine 20, and cysteine 23 together coordinate Cu(+).

The protein belongs to the metallothionein superfamily. Type 8 family.

Functionally, the metallothioneins are involved in the cellular sequestration of toxic metal ions. Binds six copper (cuprous) ions. This Agaricus bisporus (White button mushroom) protein is Metallothionein.